The following is a 354-amino-acid chain: Anthranilate phosphoribosyltransferase (354 aa).

5-phospho-alpha-D-ribose 1-diphosphate is bound by residues glycine 94, 97–98, threonine 102, 104–107, 122–130, and serine 134; these read GD, NIST, and KHGNRAASS. Glycine 94 contacts anthranilate. Position 106 (serine 106) interacts with Mg(2+). Asparagine 125 serves as a coordination point for anthranilate. Arginine 180 contacts anthranilate. Residues aspartate 238 and glutamate 239 each contribute to the Mg(2+) site.

Belongs to the anthranilate phosphoribosyltransferase family. As to quaternary structure, homodimer. Mg(2+) serves as cofactor.

The enzyme catalyses N-(5-phospho-beta-D-ribosyl)anthranilate + diphosphate = 5-phospho-alpha-D-ribose 1-diphosphate + anthranilate. Its pathway is amino-acid biosynthesis; L-tryptophan biosynthesis; L-tryptophan from chorismate: step 2/5. Functionally, catalyzes the transfer of the phosphoribosyl group of 5-phosphorylribose-1-pyrophosphate (PRPP) to anthranilate to yield N-(5'-phosphoribosyl)-anthranilate (PRA). This is Anthranilate phosphoribosyltransferase from Streptomyces avermitilis (strain ATCC 31267 / DSM 46492 / JCM 5070 / NBRC 14893 / NCIMB 12804 / NRRL 8165 / MA-4680).